The following is a 460-amino-acid chain: Glycine--tRNA ligase (460 aa).

Arginine 99 and glutamate 162 together coordinate substrate. ATP is bound by residues 194-196, 204-209, 281-282, and 325-328; these read RNE, FRTREF, EL, and GVGR. Substrate is bound at residue 209–213; sequence FEQME. 321–325 provides a ligand contact to substrate; the sequence is EPAAG.

This sequence belongs to the class-II aminoacyl-tRNA synthetase family. Homodimer.

The protein resides in the cytoplasm. The catalysed reaction is tRNA(Gly) + glycine + ATP = glycyl-tRNA(Gly) + AMP + diphosphate. In terms of biological role, catalyzes the attachment of glycine to tRNA(Gly). In Streptomyces coelicolor (strain ATCC BAA-471 / A3(2) / M145), this protein is Glycine--tRNA ligase.